The following is a 569-amino-acid chain: Cell death protein 4 (569 aa).

A CARD domain is found at 1-91 (MLCEIECRAL…HLKDFLDEYL (91 aa)). One can recognise an NB-ARC domain in the interval 116-442 (DRKLLLGNVP…IWSCVIPVDI (327 aa)). ATP is bound by residues Phe-131, 162-167 (GSGKSV), and Gln-171. Ser-166 provides a ligand contact to Mg(2+).

In terms of assembly, associates as an asymmetric homodimer with ced-9. Upon release from ced-9, forms an octamer, known as the apoptosome, and interacts with ced-3; the interaction results in ced-3 autoproteolytic cleavage and activation. The octamer (a tetramer of an asymmetric dimer) also interacts with two processed ced-3 to form a stable holoenzyme. Interacts with sex-determining protein fem-1. May form a complex composed of ced-3, ced-4 and mac-1 or of ced-9, ced-4 and mac-1. Within the complex, interacts with ced-4.

Its subcellular location is the mitochondrion. It is found in the cytoplasm. The protein localises to the perinuclear region. Functionally, plays a major role in programmed cell death (PCD, apoptosis). egl-1 binds to and directly inhibits the activity of ced-9, releasing the cell death activator ced-4 from a ced-9/ced-4 containing protein complex and allowing ced-4 to induce caspase ced-3 autoproteolytic cleavage and activation. Also forms a holoenzyme with processed ced-3 enhancing ced-3 activity. Component of the egl-1, ced-9, ced-4 and ced-3 apoptotic signaling cascade required for the initiation of programmed cell death in cells fated to die during embryonic and postembryonic development. During oogenesis, required for germline apoptosis downstream of ced-9 and upstream of ced-3 but independently of egl-1. May regulate germline apoptosis in response to DNA damage, probably downstream of let-60/ras and mpk-1 pathway. Regulates CEP neuron apoptosis in response to high Al(3+) levels. During male tail morphogenesis, promotes apoptosis of the tail-spike cell. During larval development, required for the elimination of transient presynaptic components downstream of egl-1 and ced-9 and upstream of ced-3 apoptotic pathway. Together with ain-1, a component of the miRNA-induced-silencing complex (miRISC), and probably upstream of ced-3, regulates temporal cell fate patterning during larval development. May play a role in resistance to S.typhimurium-mediated infection. This chain is Cell death protein 4, found in Caenorhabditis briggsae.